We begin with the raw amino-acid sequence, 295 residues long: Fructose-bisphosphate aldolase class 1 (295 aa).

Glu-176 functions as the Proton acceptor in the catalytic mechanism. Catalysis depends on Lys-213, which acts as the Schiff-base intermediate with dihydroxyacetone-P.

The protein belongs to the class I fructose-bisphosphate aldolase family.

It carries out the reaction beta-D-fructose 1,6-bisphosphate = D-glyceraldehyde 3-phosphate + dihydroxyacetone phosphate. Its pathway is carbohydrate degradation; glycolysis; D-glyceraldehyde 3-phosphate and glycerone phosphate from D-glucose: step 4/4. This is Fructose-bisphosphate aldolase class 1 from Treponema denticola (strain ATCC 35405 / DSM 14222 / CIP 103919 / JCM 8153 / KCTC 15104).